A 938-amino-acid chain; its full sequence is Isoleucine--tRNA ligase (938 aa).

The 'HIGH' region signature appears at 58-68 (PYANGNIHLGH). Glu562 is an L-isoleucyl-5'-AMP binding site. The 'KMSKS' region signature appears at 603 to 607 (KMSKS). Residue Lys606 coordinates ATP. Cys901, Cys904, Cys921, and Cys924 together coordinate Zn(2+).

This sequence belongs to the class-I aminoacyl-tRNA synthetase family. IleS type 1 subfamily. As to quaternary structure, monomer. Requires Zn(2+) as cofactor.

It is found in the cytoplasm. It carries out the reaction tRNA(Ile) + L-isoleucine + ATP = L-isoleucyl-tRNA(Ile) + AMP + diphosphate. Functionally, catalyzes the attachment of isoleucine to tRNA(Ile). As IleRS can inadvertently accommodate and process structurally similar amino acids such as valine, to avoid such errors it has two additional distinct tRNA(Ile)-dependent editing activities. One activity is designated as 'pretransfer' editing and involves the hydrolysis of activated Val-AMP. The other activity is designated 'posttransfer' editing and involves deacylation of mischarged Val-tRNA(Ile). This is Isoleucine--tRNA ligase from Glaesserella parasuis serovar 5 (strain SH0165) (Haemophilus parasuis).